The following is a 220-amino-acid chain: Uracil-DNA glycosylase (220 aa).

Aspartate 65 serves as the catalytic Proton acceptor.

This sequence belongs to the uracil-DNA glycosylase (UDG) superfamily. UNG family.

The protein resides in the cytoplasm. It catalyses the reaction Hydrolyzes single-stranded DNA or mismatched double-stranded DNA and polynucleotides, releasing free uracil.. Functionally, excises uracil residues from the DNA which can arise as a result of misincorporation of dUMP residues by DNA polymerase or due to deamination of cytosine. This is Uracil-DNA glycosylase from Bacteroides thetaiotaomicron (strain ATCC 29148 / DSM 2079 / JCM 5827 / CCUG 10774 / NCTC 10582 / VPI-5482 / E50).